We begin with the raw amino-acid sequence, 1259 residues long: Telomerase reverse transcriptase (1259 aa).

Positions 742–1067 (RGEPRKAVRH…SFMPWSGLLI (326 aa)) constitute a Reverse transcriptase domain. Mg(2+) is bound by residues Asp-837, Asp-999, and Asp-1000.

This sequence belongs to the reverse transcriptase family. Telomerase subfamily. Component of the telomerase ribonucleoprotein complex. Expressed in shoot apices and immature embryos.

It is found in the nucleus. It localises to the chromosome. Its subcellular location is the telomere. It catalyses the reaction DNA(n) + a 2'-deoxyribonucleoside 5'-triphosphate = DNA(n+1) + diphosphate. In terms of biological role, telomerase is a ribonucleoprotein enzyme essential for the replication of chromosome termini in most eukaryotes. It elongates telomeres. It is a reverse transcriptase that adds simple sequence repeats to chromosome ends by copying a template sequence within the RNA component of the enzyme. In Oryza sativa subsp. japonica (Rice), this protein is Telomerase reverse transcriptase (TERT).